Here is a 283-residue protein sequence, read N- to C-terminus: Pantothenate synthetase (283 aa).

An ATP-binding site is contributed by 30 to 37 (MGNLHSGH). Catalysis depends on H37, which acts as the Proton donor. Q61 is a (R)-pantoate binding site. Position 61 (Q61) interacts with beta-alanine. 149-152 (GQKD) serves as a coordination point for ATP. A (R)-pantoate-binding site is contributed by Q155. Residues V178 and 186–189 (LSSR) each bind ATP.

Belongs to the pantothenate synthetase family. In terms of assembly, homodimer.

Its subcellular location is the cytoplasm. The enzyme catalyses (R)-pantoate + beta-alanine + ATP = (R)-pantothenate + AMP + diphosphate + H(+). Its pathway is cofactor biosynthesis; (R)-pantothenate biosynthesis; (R)-pantothenate from (R)-pantoate and beta-alanine: step 1/1. In terms of biological role, catalyzes the condensation of pantoate with beta-alanine in an ATP-dependent reaction via a pantoyl-adenylate intermediate. The chain is Pantothenate synthetase from Pseudomonas fluorescens (strain SBW25).